The sequence spans 554 residues: Protein translocase subunit SecD (554 aa).

Transmembrane regions (helical) follow at residues 10 to 30 (LVIL…MFYA), 392 to 412 (AGMV…IASY), 414 to 434 (LFGF…FAVM), 435 to 455 (GAIG…TIGT), 491 to 511 (AIID…VLGA), and 516 to 536 (GFAV…IWVV).

It belongs to the SecD/SecF family. SecD subfamily. Forms a complex with SecF. Part of the essential Sec protein translocation apparatus which comprises SecA, SecYEG and auxiliary proteins SecDF-YajC and YidC.

It localises to the cell inner membrane. In terms of biological role, part of the Sec protein translocase complex. Interacts with the SecYEG preprotein conducting channel. SecDF uses the proton motive force (PMF) to complete protein translocation after the ATP-dependent function of SecA. The chain is Protein translocase subunit SecD from Rhodobacter capsulatus (strain ATCC BAA-309 / NBRC 16581 / SB1003).